The primary structure comprises 238 residues: Transcriptional repressor ThaA (238 aa).

The 66-residue stretch at 169-234 (IPGEIARVSL…HAAVKATLVG (66 aa)) folds into the HTH luxR-type domain. The segment at residues 193–212 (VSEISSILQMSVRNINFHIQ) is a DNA-binding region (H-T-H motif).

The protein belongs to the autoinducer-regulated transcriptional regulatory protein family.

Its function is as follows. Represses thailandamide production. In Burkholderia thailandensis (strain ATCC 700388 / DSM 13276 / CCUG 48851 / CIP 106301 / E264), this protein is Transcriptional repressor ThaA.